A 290-amino-acid polypeptide reads, in one-letter code: Dihydroorotate dehydrogenase B (NAD(+)), catalytic subunit (290 aa).

FMN contacts are provided by residues serine 17 and 42 to 43 (KT). Substrate-binding positions include lysine 42, 67–71 (NAIGL), and asparagine 117. An FMN-binding site is contributed by asparagine 117. Catalysis depends on serine 120, which acts as the Nucleophile. FMN-binding residues include lysine 152 and isoleucine 177. 178-179 (NT) contributes to the substrate binding site. FMN is bound by residues glycine 203, 229-230 (GG), and 251-252 (GT).

It belongs to the dihydroorotate dehydrogenase family. Type 1 subfamily. As to quaternary structure, heterotetramer of 2 PyrK and 2 PyrD type B subunits. It depends on FMN as a cofactor.

The protein resides in the cytoplasm. The enzyme catalyses (S)-dihydroorotate + NAD(+) = orotate + NADH + H(+). The protein operates within pyrimidine metabolism; UMP biosynthesis via de novo pathway; orotate from (S)-dihydroorotate (NAD(+) route): step 1/1. Its function is as follows. Catalyzes the conversion of dihydroorotate to orotate with NAD(+) as electron acceptor. This is Dihydroorotate dehydrogenase B (NAD(+)), catalytic subunit (pyrD) from Saccharolobus solfataricus (strain ATCC 35092 / DSM 1617 / JCM 11322 / P2) (Sulfolobus solfataricus).